A 72-amino-acid chain; its full sequence is Mitotic-spindle organizing protein 1 (72 aa).

The protein belongs to the MOZART1 family. In terms of assembly, part of the gamma-tubulin complex.

The protein localises to the cytoplasm. It localises to the cytoskeleton. Its subcellular location is the microtubule organizing center. It is found in the spindle pole body. In terms of biological role, required for gamma-tubulin complex recruitment to the microtubule organizing center (MTOC). This chain is Mitotic-spindle organizing protein 1, found in Cryptococcus neoformans var. neoformans serotype D (strain B-3501A) (Filobasidiella neoformans).